The sequence spans 600 residues: Prostaglandin G/H synthase 1 (600 aa).

The N-terminal stretch at 1-24 (MSRQSISLRFPLLLLLLSPSPVFS) is a signal peptide. The 39-residue stretch at 32-70 (PVNPCCYYPCQHQGICVRFGLDRYQCDCTRTGYSGPNCT) folds into the EGF-like domain. Cystine bridges form between Cys36–Cys47, Cys37–Cys159, Cys41–Cys57, and Cys59–Cys69. Asn68 carries N-linked (GlcNAc...) asparagine glycosylation. Helical transmembrane passes span 74–82 (IWTWLRTTL), 86–92 (PSFIHFL), 97–105 (RWLWDFVNA), and 108–122 (IRDT…VRSN). Asn144 carries N-linked (GlcNAc...) asparagine glycosylation. His207 (proton acceptor) is an active-site residue. Tyr385 functions as the For cyclooxygenase activity in the catalytic mechanism. Residue His388 participates in heme b binding. N-linked (GlcNAc...) asparagine glycosylation is present at Asn410. Residues Cys569 and Cys575 are joined by a disulfide bond.

This sequence belongs to the prostaglandin G/H synthase family. As to quaternary structure, homodimer. Requires heme b as cofactor.

The protein localises to the endoplasmic reticulum membrane. Its subcellular location is the microsome membrane. The catalysed reaction is (5Z,8Z,11Z,14Z)-eicosatetraenoate + AH2 + 2 O2 = prostaglandin H2 + A + H2O. The enzyme catalyses (5Z,8Z,11Z,14Z)-eicosatetraenoate + 2 O2 = prostaglandin G2. It carries out the reaction prostaglandin G2 + AH2 = prostaglandin H2 + A + H2O. It catalyses the reaction (9Z,12Z)-octadecadienoate + AH2 + O2 = (9R)-hydroxy-(10E,12Z)-octadecadienoate + A + H2O. The catalysed reaction is (9Z,12Z)-octadecadienoate + AH2 + O2 = (9S)-hydroxy-(10E,12Z)-octadecadienoate + A + H2O. The enzyme catalyses (9Z,12Z)-octadecadienoate + AH2 + O2 = (13S)-hydroxy-(9Z,11E)-octadecadienoate + A + H2O. It carries out the reaction (9Z,12Z)-octadecadienoate + AH2 + O2 = (13R)-hydroxy-(9Z,11E)-octadecadienoate + A + H2O. Its pathway is lipid metabolism; prostaglandin biosynthesis. With respect to regulation, the cyclooxygenase activity is inhibited by nonsteroidal anti-inflammatory drugs (NSAIDs) including ibuprofen, flurbiprofen, ketoprofen, naproxen, flurbiprofen, anirolac, fenclofenac and diclofenac. Its function is as follows. Dual cyclooxygenase and peroxidase that plays an important role in the biosynthesis pathway of prostanoids, a class of C20 oxylipins mainly derived from arachidonate ((5Z,8Z,11Z,14Z)-eicosatetraenoate, AA, C20:4(n-6)), with a particular role in the inflammatory response. The cyclooxygenase activity oxygenates AA to the hydroperoxy endoperoxide prostaglandin G2 (PGG2), and the peroxidase activity reduces PGG2 to the hydroxy endoperoxide prostaglandin H2 (PGH2), the precursor of all 2-series prostaglandins and thromboxanes. This complex transformation is initiated by abstraction of hydrogen at carbon 13 (with S-stereochemistry), followed by insertion of molecular O2 to form the endoperoxide bridge between carbon 9 and 11 that defines prostaglandins. The insertion of a second molecule of O2 (bis-oxygenase activity) yields a hydroperoxy group in PGG2 that is then reduced to PGH2 by two electrons. Involved in the constitutive production of prostanoids in particular in the stomach and platelets. In gastric epithelial cells, it is a key step in the generation of prostaglandins, such as prostaglandin E2 (PGE2), which plays an important role in cytoprotection. In platelets, it is involved in the generation of thromboxane A2 (TXA2), which promotes platelet activation and aggregation, vasoconstriction and proliferation of vascular smooth muscle cells. Can also use linoleate (LA, (9Z,12Z)-octadecadienoate, C18:2(n-6)) as substrate and produce hydroxyoctadecadienoates (HODEs) in a regio- and stereospecific manner, being (9R)-HODE ((9R)-hydroxy-(10E,12Z)-octadecadienoate) and (13S)-HODE ((13S)-hydroxy-(9Z,11E)-octadecadienoate) its major products. The sequence is that of Prostaglandin G/H synthase 1 (PTGS1) from Ovis aries (Sheep).